A 346-amino-acid polypeptide reads, in one-letter code: Guanine nucleotide-binding protein subunit beta-2 (346 aa).

7 WD repeats span residues 57 to 96, 99 to 138, 147 to 185, 188 to 227, 230 to 269, 274 to 313, and 316 to 346; these read GHIN…KVQI, LRSA…ASGV, GYEG…KTMD, GHAG…HKQM, GHDM…QIAQ, QKNT…HTGT, and GHEN…RLWL.

The protein belongs to the WD repeat G protein beta family. In terms of assembly, g proteins are composed of 3 units, alpha, beta and gamma. Interacts with Ggamma30A/Guanine nucleotide-binding protein subunit gamma-e. As to expression, expressed exclusively in photoreceptor cells in the compound eye (at protein level).

The protein localises to the cytoplasm. It is found in the cell projection. The protein resides in the axon. Its subcellular location is the rhabdomere. In terms of biological role, guanine nucleotide-binding proteins (G proteins) are involved as a modulator or transducer in various transmembrane signaling systems. The beta and gamma chains are required for the GTPase activity, for replacement of GDP by GTP, and for G protein-effector interaction. The protein is Guanine nucleotide-binding protein subunit beta-2 (Gbeta76C) of Drosophila melanogaster (Fruit fly).